The primary structure comprises 254 residues: MKRIVQVKNVKIGEGIPKICVPIVGATSKEILDEAEKLKELTLDIVEWRVDFYEEVFDIEKVKDTLSKLTTTLNEVPLIFTFRNKIEGGEREIPIEYYLKLNLEVAKTKLVDLIDVELFIGDDLVKEIVEVAHDNDVKVIISNHDFFKTPCKEEIISRLIKMIQLNGDLPKIAVMPQCEIDVLTLLYATNEVKHKYPNNSIITMSMSGRGIISRIAGEIFGSCLTFGAAKKASAPGQIGVEELNSVLKVLHENI.

Residues 47–49 and R83 each bind 3-dehydroquinate; that span reads EWR. The Proton donor/acceptor role is filled by H144. The active-site Schiff-base intermediate with substrate is K171. The 3-dehydroquinate site is built by R214, S233, and Q237.

The protein belongs to the type-I 3-dehydroquinase family. As to quaternary structure, homodimer.

It carries out the reaction 3-dehydroquinate = 3-dehydroshikimate + H2O. It functions in the pathway metabolic intermediate biosynthesis; chorismate biosynthesis; chorismate from D-erythrose 4-phosphate and phosphoenolpyruvate: step 3/7. Involved in the third step of the chorismate pathway, which leads to the biosynthesis of aromatic amino acids. Catalyzes the cis-dehydration of 3-dehydroquinate (DHQ) and introduces the first double bond of the aromatic ring to yield 3-dehydroshikimate. The sequence is that of 3-dehydroquinate dehydratase from Clostridium botulinum (strain Eklund 17B / Type B).